Consider the following 72-residue polypeptide: Conotoxin Gla(2)-TxVI/A (72 aa).

Positions 1-19 (MQKLIILLLVAAVLMSTQA) are cleaved as a signal peptide. A propeptide spanning residues 20 to 44 (LFQEKRPMKKIDFLSKGKTDAEKQQ) is cleaved from the precursor. 3 cysteine pairs are disulfide-bonded: C48–C62, C55–C66, and C61–C70. The residue at position 56 (E56) is a 4-carboxyglutamate. Residue P58 is modified to 4-hydroxyproline. Serine amide is present on S71.

It belongs to the conotoxin O2 superfamily. In terms of processing, brominated at one of the Trp residues. In terms of tissue distribution, expressed by the venom duct.

It is found in the secreted. The polypeptide is Conotoxin Gla(2)-TxVI/A (Conus textile (Cloth-of-gold cone)).